The following is an 89-amino-acid chain: Small ribosomal subunit protein bS20 (89 aa).

2 disordered regions span residues 1 to 25 (MANI…ASMK) and 69 to 89 (KNAA…IQAS). Residues 7–20 (AIKRAKTSEKRRAH) show a composition bias toward basic residues.

The protein belongs to the bacterial ribosomal protein bS20 family.

Functionally, binds directly to 16S ribosomal RNA. The polypeptide is Small ribosomal subunit protein bS20 (Geobacillus thermodenitrificans (strain NG80-2)).